Reading from the N-terminus, the 236-residue chain is 2,3,4,5-tetrahydropyridine-2,6-dicarboxylate N-acetyltransferase (236 aa).

This sequence belongs to the transferase hexapeptide repeat family. DapH subfamily.

The enzyme catalyses (S)-2,3,4,5-tetrahydrodipicolinate + acetyl-CoA + H2O = L-2-acetamido-6-oxoheptanedioate + CoA. It participates in amino-acid biosynthesis; L-lysine biosynthesis via DAP pathway; LL-2,6-diaminopimelate from (S)-tetrahydrodipicolinate (acetylase route): step 1/3. Functionally, catalyzes the transfer of an acetyl group from acetyl-CoA to tetrahydrodipicolinate. This chain is 2,3,4,5-tetrahydropyridine-2,6-dicarboxylate N-acetyltransferase, found in Clostridium botulinum (strain ATCC 19397 / Type A).